Here is a 313-residue protein sequence, read N- to C-terminus: Ribosomal RNA small subunit methyltransferase H (313 aa).

S-adenosyl-L-methionine is bound by residues 37-39 (GGH), Asp-57, Phe-83, Asp-104, and Gln-111.

It belongs to the methyltransferase superfamily. RsmH family.

Its subcellular location is the cytoplasm. It carries out the reaction cytidine(1402) in 16S rRNA + S-adenosyl-L-methionine = N(4)-methylcytidine(1402) in 16S rRNA + S-adenosyl-L-homocysteine + H(+). Its function is as follows. Specifically methylates the N4 position of cytidine in position 1402 (C1402) of 16S rRNA. The chain is Ribosomal RNA small subunit methyltransferase H from Mycoplasmoides gallisepticum (strain R(low / passage 15 / clone 2)) (Mycoplasma gallisepticum).